The sequence spans 366 residues: uncharacterized protein (366 aa).

In terms of domain architecture, OBG-type G spans Gly-64–Asn-289. Residues Gly-70–Ser-77, Asp-116–Ile-120, and Asn-247–Asp-250 contribute to the GTP site. The TGS domain occupies Asn-289 to Lys-365.

The protein belongs to the TRAFAC class OBG-HflX-like GTPase superfamily. OBG GTPase family.

This is an uncharacterized protein from Schizosaccharomyces pombe (strain 972 / ATCC 24843) (Fission yeast).